Reading from the N-terminus, the 718-residue chain is Homeobox-leucine zipper protein HDG9 (718 aa).

Positions 1 to 12 (MDFTRDDNSSDE) are enriched in basic and acidic residues. A disordered region spans residues 1–35 (MDFTRDDNSSDERENDVDANTNNRHEKKGYHRHTN). Residues 26 to 85 (EKKGYHRHTNEQIHRLETYFKECPHPDEFQRRLLGEELNLKPKQIKFWFQNKRTQAKSHN) constitute a DNA-binding region (homeobox). The stretch at 78 to 152 (RTQAKSHNEK…LKDEYERVSN (75 aa)) forms a coiled coil. The disordered stretch occupies residues 169–209 (PYLHGPSNHASTSKNRPALYGTSSNRLPEPSSIFRGPYTRG). The span at 176-194 (NHASTSKNRPALYGTSSNR) shows a compositional bias: polar residues. An START domain is found at 232–464 (SQLEKIAMLE…LERTCERLIF (233 aa)).

This sequence belongs to the HD-ZIP homeobox family. Class IV subfamily. In terms of tissue distribution, expressed in anthers with highest levels in the tapetum and pollen grains, and chalazal end of the embryo sac.

Its subcellular location is the nucleus. Functionally, probable transcription factor that binds to the DNA sequence 5'-GCATTAAATGCGCA-3'. The chain is Homeobox-leucine zipper protein HDG9 (HDG9) from Arabidopsis thaliana (Mouse-ear cress).